Here is a 1227-residue protein sequence, read N- to C-terminus: RNA-binding protein 20 (1227 aa).

2 disordered regions span residues 1–58 (MVLA…QAGL) and 289–374 (GSHV…SKQG). The span at 27–42 (PGARASPAPSGPRGMQ) shows a compositional bias: low complexity. The segment covering 43 to 56 (QPPPPPQPPPPPQA) has biased composition (pro residues). Residues 313–331 (QGTNSQWESPHGFSGQSKP) show a composition bias toward polar residues. Residues 409-443 (HLPHICSICDKKVFDLKDWELHVKGKLHAQKCLVF) form a U1-type zinc finger. Ser-498 is modified (phosphoserine). Positions 518 to 593 (RVVHICNLPE…EKLLIRMSKR (76 aa)) constitute an RRM domain. A compositionally biased stretch (basic and acidic residues) spans 624 to 634 (EADRYGPERPR). Disordered stretches follow at residues 624-906 (EADR…TNME) and 977-1089 (SLKS…ASPP). The tract at residues 628-655 (YGPERPRSRSPVSRSLSPRSHTPSFTSC) is RS. Residues Ser-635, Ser-637, Ser-640, Ser-642, Ser-660, and Ser-679 each carry the phosphoserine modification. Low complexity predominate over residues 636 to 660 (RSPVSRSLSPRSHTPSFTSCSSSHS). Composition is skewed to basic and acidic residues over residues 674–709 (DSWE…PWAH) and 716–738 (RQLD…EKYP). The span at 741–752 (GSPNLPHSVSSY) shows a compositional bias: polar residues. Ser-742 carries the post-translational modification Phosphoserine. Composition is skewed to basic and acidic residues over residues 753–772 (KSRE…DKYL), 784–807 (RKDE…EDGL), and 816–856 (EGAK…KEEQ). A Phosphoserine modification is found at Ser-801. A phosphoserine mark is found at Ser-865, Ser-876, Ser-891, Ser-893, Ser-977, Ser-980, and Ser-1013. Positions 868–888 (RQEKEAEFSDPENTRTKKEQD) are enriched in basic and acidic residues. Residues 1024–1036 (CYEKEAKGVESSD) are compositionally biased toward basic and acidic residues. Phosphoserine is present on residues Ser-1048, Ser-1060, Ser-1080, Ser-1115, and Ser-1120. The Matrin-type zinc-finger motif lies at 1161–1192 (FYCKLCGLFYTSEETAKMSHCRSAVHYRNLQK). A compositionally biased stretch (basic and acidic residues) spans 1201 to 1215 (GLKETEGADSPRPED). A disordered region spans residues 1201–1227 (GLKETEGADSPRPEDSGIVPRFERKKL). At Ser-1210 the chain carries Phosphoserine.

Associates with components of the U1 and U2 U1 small nuclear ribonucleoprotein complexes. In terms of processing, phosphorylation regulates the subcellular localization. Phosphorylation of Ser-635 and Ser-637 in the RS (arginine/serine-rich) region promotes nuclear localization of the protein. In contrast, phosphorylation of the C-terminal disordered region promotes localization to cytoplasmic ribonucleoprotein granules. As to expression, mainly expressed in the heart. Also expressed in skeletal muscle tissues, ovary, small intestine and colon.

Its subcellular location is the nucleus. The protein localises to the cytoplasm. It is found in the cytoplasmic ribonucleoprotein granule. RNA-binding protein that acts as a regulator of mRNA splicing of a subset of genes encoding key structural proteins involved in cardiac development, such as TTN (Titin), CACNA1C, CAMK2D or PDLIM5/ENH. Acts as a repressor of mRNA splicing: specifically binds the 5'UCUU-3' motif that is predominantly found within intronic sequences of pre-mRNAs, leading to the exclusion of specific exons in target transcripts. RBM20-mediated exon skipping is hormone-dependent and is essential for TTN isoform transition in both cardiac and skeletal muscles. RBM20-mediated exon skipping of TTN provides substrates for the formation of circular RNA (circRNAs) from the TTN transcripts. Together with RBM24, promotes the expression of short isoforms of PDLIM5/ENH in cardiomyocytes. This is RNA-binding protein 20 from Homo sapiens (Human).